A 282-amino-acid polypeptide reads, in one-letter code: V-set domain-containing T-cell activation inhibitor 1 (282 aa).

The N-terminal stretch at 1–24 (MASLGQILFWSIISIIIILAGAIA) is a signal peptide. The Extracellular segment spans residues 25 to 259 (LIIGFGISGR…HLQLLNSKAS (235 aa)). Ig-like V-type domains lie at 35 to 146 (HSIT…LEYK) and 153 to 241 (PEVN…IKVT). 2 disulfide bridges follow: cysteine 56–cysteine 130 and cysteine 168–cysteine 225. A glycan (N-linked (GlcNAc...) asparagine) is linked at asparagine 216. Residues 260-280 (LCVSSFFAISWALLPLSPYLM) traverse the membrane as a helical segment. The Cytoplasmic portion of the chain corresponds to 281-282 (LK).

Belongs to the immunoglobulin superfamily. BTN/MOG family. N-glycosylated. As to expression, overexpressed in breast, ovarian, endometrial, renal cell (RCC) and non-small-cell lung cancers (NSCLC). Expressed on activated T- and B-cells, monocytes and dendritic cells, but not expressed in most normal tissues (at protein level). Widely expressed, including in kidney, liver, lung, ovary, placenta, spleen and testis.

It is found in the cell membrane. Its function is as follows. Negatively regulates T-cell-mediated immune response by inhibiting T-cell activation, proliferation, cytokine production and development of cytotoxicity. When expressed on the cell surface of tumor macrophages, plays an important role, together with regulatory T-cells (Treg), in the suppression of tumor-associated antigen-specific T-cell immunity. Involved in promoting epithelial cell transformation. This chain is V-set domain-containing T-cell activation inhibitor 1, found in Homo sapiens (Human).